The following is a 402-amino-acid chain: MDTKTFKRTLQHSENYNRKGFGHQAEVATQLQSEYQSSLIQEIRDRNYTLQRGDVTIRLAQAFGFCWGVERAVAMAYETRKHFPTERIWITNEIIHNPSVNQRMQEMQVGFIPVEAGNKDFSVVGNNDVVILPAFGASVQEMQLLSEKGCKIVDTTCPWVSKVWNTVEKHKKGDHTSIIHGKYKHEETIATSSFAGKYLIVLNLKEAQYVADYILHGRNREEFLQKFAKACSAGFDPDKDLERVGIANQTTMLKGETEQIGKLFEHTMLQKYGPVELNQHFQSFNTICDATQERQDAMLELVQENLDLMIVIGGFNSSNTTQLQQISQERGLPSYHIDVVERIKSVNSIEHRQLNGELVTTENWLPAGKIVVGVTSGASTPDKVVEDVIEKIFALKATTAVV.

C66 is a binding site for [4Fe-4S] cluster. H96 contacts (2E)-4-hydroxy-3-methylbut-2-enyl diphosphate. A dimethylallyl diphosphate-binding site is contributed by H96. Residue H96 participates in isopentenyl diphosphate binding. C157 is a [4Fe-4S] cluster binding site. H185 lines the (2E)-4-hydroxy-3-methylbut-2-enyl diphosphate pocket. H185 provides a ligand contact to dimethylallyl diphosphate. H185 contributes to the isopentenyl diphosphate binding site. E187 acts as the Proton donor in catalysis. T250 is a binding site for (2E)-4-hydroxy-3-methylbut-2-enyl diphosphate. C288 contributes to the [4Fe-4S] cluster binding site. (2E)-4-hydroxy-3-methylbut-2-enyl diphosphate is bound by residues S317, S318, N319, and S379. Dimethylallyl diphosphate is bound by residues S317, S318, N319, and S379. Residues S317, S318, N319, and S379 each coordinate isopentenyl diphosphate.

The protein belongs to the IspH family. It depends on [4Fe-4S] cluster as a cofactor.

It carries out the reaction isopentenyl diphosphate + 2 oxidized [2Fe-2S]-[ferredoxin] + H2O = (2E)-4-hydroxy-3-methylbut-2-enyl diphosphate + 2 reduced [2Fe-2S]-[ferredoxin] + 2 H(+). The catalysed reaction is dimethylallyl diphosphate + 2 oxidized [2Fe-2S]-[ferredoxin] + H2O = (2E)-4-hydroxy-3-methylbut-2-enyl diphosphate + 2 reduced [2Fe-2S]-[ferredoxin] + 2 H(+). It participates in isoprenoid biosynthesis; dimethylallyl diphosphate biosynthesis; dimethylallyl diphosphate from (2E)-4-hydroxy-3-methylbutenyl diphosphate: step 1/1. It functions in the pathway isoprenoid biosynthesis; isopentenyl diphosphate biosynthesis via DXP pathway; isopentenyl diphosphate from 1-deoxy-D-xylulose 5-phosphate: step 6/6. Its function is as follows. Catalyzes the conversion of 1-hydroxy-2-methyl-2-(E)-butenyl 4-diphosphate (HMBPP) into a mixture of isopentenyl diphosphate (IPP) and dimethylallyl diphosphate (DMAPP). Acts in the terminal step of the DOXP/MEP pathway for isoprenoid precursor biosynthesis. This chain is 4-hydroxy-3-methylbut-2-enyl diphosphate reductase, found in Trichormus variabilis (strain ATCC 29413 / PCC 7937) (Anabaena variabilis).